Reading from the N-terminus, the 369-residue chain is Flagellar P-ring protein (369 aa).

A signal peptide spans 1–22; it reads MTKFKHLLALAALLLAAGAAQA.

The protein belongs to the FlgI family. As to quaternary structure, the basal body constitutes a major portion of the flagellar organelle and consists of four rings (L,P,S, and M) mounted on a central rod.

The protein resides in the periplasm. It localises to the bacterial flagellum basal body. Functionally, assembles around the rod to form the L-ring and probably protects the motor/basal body from shearing forces during rotation. This Pseudomonas aeruginosa (strain LESB58) protein is Flagellar P-ring protein.